The primary structure comprises 354 residues: Quinone-reactive Ni/Fe-hydrogenase small chain (354 aa).

A signal peptide (tat-type signal) is located at residues 1 to 36 (MLEEKGIERRDFMKWAGAMTAMLSLPATFTPLTAKA). Residues C53, C56, C153, C186, H224, C227, C252, and C258 each contribute to the [4Fe-4S] cluster site. C267, C286, and C289 together coordinate [3Fe-4S] cluster.

It belongs to the [NiFe]/[NiFeSe] hydrogenase small subunit family. In terms of assembly, heterodimer of a large and a small subunit. The cofactor is [4Fe-4S] cluster. Requires [3Fe-4S] cluster as cofactor. In terms of processing, predicted to be exported by the Tat system. The position of the signal peptide cleavage has been experimentally proven.

Its subcellular location is the cell membrane. The catalysed reaction is H2 + a menaquinone = a menaquinol. The polypeptide is Quinone-reactive Ni/Fe-hydrogenase small chain (hydA) (Wolinella succinogenes (strain ATCC 29543 / DSM 1740 / CCUG 13145 / JCM 31913 / LMG 7466 / NCTC 11488 / FDC 602W) (Vibrio succinogenes)).